The primary structure comprises 215 residues: Large ribosomal subunit protein uL1 (215 aa).

Belongs to the universal ribosomal protein uL1 family. In terms of assembly, part of the 50S ribosomal subunit.

Functionally, binds directly to 23S rRNA. Probably involved in E site tRNA release. In terms of biological role, protein L1 is also a translational repressor protein, it controls the translation of its operon by binding to its mRNA. This Staphylothermus marinus (strain ATCC 43588 / DSM 3639 / JCM 9404 / F1) protein is Large ribosomal subunit protein uL1.